A 4351-amino-acid polypeptide reads, in one-letter code: Protocadherin Fat 2 (4351 aa).

The signal sequence occupies residues 1 to 18 (MTLVLLGLAILLLHRAAC). Residues 19-4050 (EKSLEETIPP…IKRGDWGQQE (4032 aa)) are Extracellular-facing. 2 consecutive Cadherin domains span residues 34–148 (THSL…KPLF) and 149–256 (SPPS…PPAI). Asn-39, Asn-210, Asn-280, and Asn-330 each carry an N-linked (GlcNAc...) asparagine glycan. Cadherin domains follow at residues 363–458 (EKAV…APVF), 459–564 (NRSS…QPMF), 565–669 (EEVN…VPVQ), 716–820 (DHFP…PPRF), 821–925 (PPGG…PPQC), 926–1032 (ITEH…SPHF), 1033–1142 (SSFV…RPVF), 1138–1242 (SRPV…PPMF), 1243–1346 (SHKL…SSIP), 1350–1448 (DESY…RPQF), 1449–1555 (LQDH…SPHF), 1556–1660 (TQLR…APVF), 1661–1758 (SKDE…PPAF), 1759–1872 (GKPT…PPRF), 1873–1968 (SEQI…SLQF), 1969–2070 (DQDV…IPEF), 2071–2171 (QHLP…NPLF), 2172–2272 (QSPY…PPTF), 2273–2379 (SQLV…PPKF), 2380–2481 (REPQ…SPEF), 2482–2585 (QQNV…APQF), 2586–2692 (KASG…LPKF), 2693–2799 (SEPL…RPVF), 2800–2908 (EADP…PPRF), 2909–3013 (ASED…SPQC), 3014–3115 (SQLL…APRF), 3116–3220 (FPSH…LPIF), 3221–3323 (LNAE…HPRF), 3324–3428 (THDL…PPRF), 3429–3533 (FQLN…PPST), and 3534–3631 (LPLE…VPQQ). 4 N-linked (GlcNAc...) asparagine glycosylation sites follow: Asn-459, Asn-568, Asn-627, and Asn-789. A glycan (N-linked (GlcNAc...) asparagine) is linked at Asn-996. 3 N-linked (GlcNAc...) asparagine glycosylation sites follow: Asn-1175, Asn-1276, and Asn-1417. Asn-1899, Asn-1998, Asn-2007, Asn-2102, Asn-2165, Asn-2183, Asn-2325, Asn-2368, Asn-2387, Asn-2430, Asn-2470, Asn-2547, and Asn-2597 each carry an N-linked (GlcNAc...) asparagine glycan. N-linked (GlcNAc...) asparagine glycosylation is found at Asn-3127, Asn-3278, and Asn-3312. N-linked (GlcNAc...) asparagine glycosylation is found at Asn-3432, Asn-3603, Asn-3770, Asn-3774, Asn-3815, Asn-3842, Asn-3875, and Asn-3906. Residues 3775–3946 (GTTLRFSGQS…RLETWALSQC (172 aa)) enclose the Laminin G-like domain. Disulfide bonds link Cys-3914/Cys-3946, Cys-3953/Cys-3964, Cys-3958/Cys-3974, and Cys-3976/Cys-3985. 2 consecutive EGF-like domains span residues 3949-3986 (PGTA…RNCE) and 3988-4024 (GREN…DRCE). Asn-3991 carries an N-linked (GlcNAc...) asparagine glycan. 3 disulfides stabilise this stretch: Cys-3992/Cys-4003, Cys-3997/Cys-4012, and Cys-4014/Cys-4023. The chain crosses the membrane as a helical span at residues 4051–4071 (FLVITVALPLVIIATVGLLLY). The Cytoplasmic segment spans residues 4072-4351 (CRRRKSHKPV…DYGSCEEVMF (280 aa)). The disordered stretch occupies residues 4316–4340 (VNGGPATGRSQPRAPPNYEGSDMVE).

Homodimer. Cerebellum-specific expression. Expressed in thin parallel fibers of cerebellar granule cells.

The protein localises to the cell membrane. It localises to the cell junction. Its subcellular location is the golgi apparatus. It is found in the trans-Golgi network. Its function is as follows. Involved in the regulation of cell migration. May be involved in mediating the organization of the parallel fibers of granule cells during cerebellar development. The protein is Protocadherin Fat 2 (Fat2) of Rattus norvegicus (Rat).